The sequence spans 332 residues: Biotin synthase (332 aa).

One can recognise a Radical SAM core domain in the interval 51-279; it reads YKVQLASLLS…RSRVRLSAGR (229 aa). [4Fe-4S] cluster contacts are provided by Cys-66, Cys-70, and Cys-73. Cys-110, Cys-142, Cys-202, and Arg-274 together coordinate [2Fe-2S] cluster.

Belongs to the radical SAM superfamily. Biotin synthase family. In terms of assembly, homodimer. [4Fe-4S] cluster serves as cofactor. It depends on [2Fe-2S] cluster as a cofactor.

It carries out the reaction (4R,5S)-dethiobiotin + (sulfur carrier)-SH + 2 reduced [2Fe-2S]-[ferredoxin] + 2 S-adenosyl-L-methionine = (sulfur carrier)-H + biotin + 2 5'-deoxyadenosine + 2 L-methionine + 2 oxidized [2Fe-2S]-[ferredoxin]. Its pathway is cofactor biosynthesis; biotin biosynthesis; biotin from 7,8-diaminononanoate: step 2/2. In terms of biological role, catalyzes the conversion of dethiobiotin (DTB) to biotin by the insertion of a sulfur atom into dethiobiotin via a radical-based mechanism. The sequence is that of Biotin synthase from Prochlorococcus marinus (strain SARG / CCMP1375 / SS120).